We begin with the raw amino-acid sequence, 131 residues long: Holo-[acyl-carrier-protein] synthase (131 aa).

Residues Asp8 and Glu59 each coordinate Mg(2+).

The protein belongs to the P-Pant transferase superfamily. AcpS family. Mg(2+) is required as a cofactor.

The protein localises to the cytoplasm. The catalysed reaction is apo-[ACP] + CoA = holo-[ACP] + adenosine 3',5'-bisphosphate + H(+). Its function is as follows. Transfers the 4'-phosphopantetheine moiety from coenzyme A to a Ser of acyl-carrier-protein. This is Holo-[acyl-carrier-protein] synthase from Rickettsia africae (strain ESF-5).